The following is a 572-amino-acid chain: MNLHQTVEREAAAAFAAAGIADSPVVLQPTKNAEHGDFQINGVMGAAKKAKQNPRELAQKVAEALADNAVIESAEVAGPGFINLRLRPEFLAQNIQTALNDARFGIAKTDKPQTVVIDYSSPNLAKEMHVGHLRSSIIGDSISRVLAFMGNTVVRQNHVGDWGTQFGMLVAYLVEQQKDNAAFELADLEQFYRAAKVRFDEDPAFADTAREYVVKLQGGDETVLALWKQFVDISLSHAQAVYDTLGLKLRPEDVAGESKYNDDLQPVVDDLVQKGLAVEDDGAKVVFLDEFKNKEGEPAAFIVQKQGGGFLYASTDLACLRYRVGTLHADRLLYVVDHRQALHFEQLFTTSRKAGYLPENVGAAFVGFGTMMGKDGKPFKTRSGDTVKLVDLLTEAVERAAALVKEKNPELGADEAAKIGKTVGIGAVKYADLSKNRTSNYVFDWDAMLSFEGNTAPYLQYAYTRVQSVFRKAGEWDATAPTVLSEPLEKQLAAELLKFEDVLQSVADTAYPHYLAAYLYQIATLFSRFYEACPILKAESASRNSRLQLAKLTGDTLKQGLDLLGIDVLDVM.

A 'HIGH' region motif is present at residues 122-132 (PNLAKEMHVGH).

This sequence belongs to the class-I aminoacyl-tRNA synthetase family. As to quaternary structure, monomer.

The protein resides in the cytoplasm. It carries out the reaction tRNA(Arg) + L-arginine + ATP = L-arginyl-tRNA(Arg) + AMP + diphosphate. This Neisseria meningitidis serogroup A / serotype 4A (strain DSM 15465 / Z2491) protein is Arginine--tRNA ligase.